Consider the following 301-residue polypeptide: Enolase-phosphatase E1 (301 aa).

Mg(2+) is bound by residues Asp22 and Glu24. Residues 163 to 164 and Lys197 contribute to the substrate site; that span reads SS. Mg(2+) is bound at residue Asp222. The disordered stretch occupies residues 273–301; it reads AQAGDTEAKRSASGDGALAAKKAPPTHDF.

This sequence belongs to the HAD-like hydrolase superfamily. MasA/MtnC family. Monomer. Mg(2+) serves as cofactor.

The protein resides in the cytoplasm. The protein localises to the nucleus. It catalyses the reaction 5-methylsulfanyl-2,3-dioxopentyl phosphate + H2O = 1,2-dihydroxy-5-(methylsulfanyl)pent-1-en-3-one + phosphate. It participates in amino-acid biosynthesis; L-methionine biosynthesis via salvage pathway; L-methionine from S-methyl-5-thio-alpha-D-ribose 1-phosphate: step 3/6. The protein operates within amino-acid biosynthesis; L-methionine biosynthesis via salvage pathway; L-methionine from S-methyl-5-thio-alpha-D-ribose 1-phosphate: step 4/6. Functionally, bifunctional enzyme that catalyzes the enolization of 2,3-diketo-5-methylthiopentyl-1-phosphate (DK-MTP-1-P) into the intermediate 2-hydroxy-3-keto-5-methylthiopentenyl-1-phosphate (HK-MTPenyl-1-P), which is then dephosphorylated to form the acireductone 1,2-dihydroxy-3-keto-5-methylthiopentene (DHK-MTPene). The protein is Enolase-phosphatase E1 of Monosiga brevicollis (Choanoflagellate).